The following is a 697-amino-acid chain: Potassium-transporting ATPase ATP-binding subunit (697 aa).

Transmembrane regions (helical) follow at residues Pro-55–Ser-75, Ser-79–Ala-99, Leu-245–Phe-265, and Val-271–Ile-291. The active-site 4-aspartylphosphate intermediate is the Asp-324. ATP is bound by residues Asp-361, Glu-365, Phe-393–Ser-400, and Lys-412. Positions 535 and 539 each coordinate Mg(2+). The next 3 membrane-spanning stretches (helical) occupy residues Phe-605–Met-625, Ala-633–Met-653, and Gly-677–Ile-697.

The protein belongs to the cation transport ATPase (P-type) (TC 3.A.3) family. Type IA subfamily. The system is composed of three essential subunits: KdpA, KdpB and KdpC.

It is found in the cell membrane. It catalyses the reaction K(+)(out) + ATP + H2O = K(+)(in) + ADP + phosphate + H(+). In terms of biological role, part of the high-affinity ATP-driven potassium transport (or Kdp) system, which catalyzes the hydrolysis of ATP coupled with the electrogenic transport of potassium into the cytoplasm. This subunit is responsible for energy coupling to the transport system and for the release of the potassium ions to the cytoplasm. In Bacillus cereus (strain ZK / E33L), this protein is Potassium-transporting ATPase ATP-binding subunit.